Here is a 387-residue protein sequence, read N- to C-terminus: Gamma-butyrobetaine dioxygenase (387 aa).

The Zn(2+) site is built by C38, C40, C43, and H82. The Fe cation site is built by H202, D204, and H347. The residue at position 351 (S351) is a Phosphoserine.

It belongs to the gamma-BBH/TMLD family. Fe(2+) is required as a cofactor. L-ascorbate serves as cofactor.

The protein localises to the cytoplasm. It carries out the reaction 4-(trimethylamino)butanoate + 2-oxoglutarate + O2 = carnitine + succinate + CO2. It functions in the pathway amine and polyamine biosynthesis; carnitine biosynthesis. Its function is as follows. Catalyzes the formation of L-carnitine from gamma-butyrobetaine. The polypeptide is Gamma-butyrobetaine dioxygenase (Bbox1) (Mus musculus (Mouse)).